The primary structure comprises 321 residues: Peroxidase 4 (321 aa).

A signal peptide spans 1-25 (MASSSFSIVVVALGVLALFAGSSSA). Q26 carries the pyrrolidone carboxylic acid modification. 4 disulfide bridges follow: C36/C116, C69/C74, C122/C317, and C201/C226. Catalysis depends on H67, which acts as the Proton acceptor. 5 residues coordinate Ca(2+): D68, V71, G73, D75, and S77. P164 contacts substrate. H194 contributes to the heme b binding site. Residue T195 coordinates Ca(2+). N210 is a glycosylation site (N-linked (GlcNAc...) asparagine). 3 residues coordinate Ca(2+): D241, T244, and D249.

Belongs to the peroxidase family. Classical plant (class III) peroxidase subfamily. Heme b is required as a cofactor. Requires Ca(2+) as cofactor.

It is found in the secreted. The catalysed reaction is 2 a phenolic donor + H2O2 = 2 a phenolic radical donor + 2 H2O. Its function is as follows. Removal of H(2)O(2), oxidation of toxic reductants, biosynthesis and degradation of lignin, suberization, auxin catabolism, response to environmental stresses such as wounding, pathogen attack and oxidative stress. These functions might be dependent on each isozyme/isoform in each plant tissue. This Vitis vinifera (Grape) protein is Peroxidase 4.